The following is a 428-amino-acid chain: Elongation factor 1-alpha (428 aa).

The tr-type G domain maps to 5–217 (KPHVNIVFIG…DQIPEPEKPT (213 aa)). The interval 14-21 (GHVDHGKS) is G1. 14 to 21 (GHVDHGKS) is a GTP binding site. Ser-21 lines the Mg(2+) pocket. The interval 68-72 (GITID) is G2. Residues 89–92 (DAPG) are G3. GTP is bound by residues 89–93 (DAPGH) and 144–147 (NKMD). The tract at residues 144–147 (NKMD) is G4. Residues 181–183 (SAW) are G5.

This sequence belongs to the TRAFAC class translation factor GTPase superfamily. Classic translation factor GTPase family. EF-Tu/EF-1A subfamily.

Its subcellular location is the cytoplasm. It carries out the reaction GTP + H2O = GDP + phosphate + H(+). GTP hydrolase that promotes the GTP-dependent binding of aminoacyl-tRNA to the A-site of ribosomes during protein biosynthesis. The sequence is that of Elongation factor 1-alpha from Thermococcus sibiricus (strain DSM 12597 / MM 739).